The sequence spans 187 residues: Hypoxanthine/guanine phosphoribosyltransferase (187 aa).

Belongs to the purine/pyrimidine phosphoribosyltransferase family. Archaeal HPRT subfamily. As to quaternary structure, homodimer.

It is found in the cytoplasm. It carries out the reaction IMP + diphosphate = hypoxanthine + 5-phospho-alpha-D-ribose 1-diphosphate. It catalyses the reaction GMP + diphosphate = guanine + 5-phospho-alpha-D-ribose 1-diphosphate. Its pathway is purine metabolism; IMP biosynthesis via salvage pathway; IMP from hypoxanthine: step 1/1. In terms of biological role, catalyzes a salvage reaction resulting in the formation of IMP that is energically less costly than de novo synthesis. The protein is Hypoxanthine/guanine phosphoribosyltransferase of Methanopyrus kandleri (strain AV19 / DSM 6324 / JCM 9639 / NBRC 100938).